A 117-amino-acid chain; its full sequence is Small ribosomal subunit protein bS18c (117 aa).

The segment at 86 to 117 (SELTPRTNALKARNKNKQNKYQNNQTKFLSNF) is disordered.

Belongs to the bacterial ribosomal protein bS18 family. In terms of assembly, part of the 30S ribosomal subunit.

It localises to the plastid. The polypeptide is Small ribosomal subunit protein bS18c (Cuscuta exaltata (Tall dodder)).